The sequence spans 428 residues: Glutamate-1-semialdehyde 2,1-aminomutase (428 aa).

At lysine 265 the chain carries N6-(pyridoxal phosphate)lysine.

It belongs to the class-III pyridoxal-phosphate-dependent aminotransferase family. HemL subfamily. Homodimer. The cofactor is pyridoxal 5'-phosphate.

Its subcellular location is the cytoplasm. It catalyses the reaction (S)-4-amino-5-oxopentanoate = 5-aminolevulinate. The protein operates within porphyrin-containing compound metabolism; protoporphyrin-IX biosynthesis; 5-aminolevulinate from L-glutamyl-tRNA(Glu): step 2/2. This Ruthia magnifica subsp. Calyptogena magnifica protein is Glutamate-1-semialdehyde 2,1-aminomutase.